The chain runs to 89 residues: Small ribosomal subunit protein bS20 (89 aa).

Residues 1–12 (MANIKSAKKRVK) are compositionally biased toward basic residues. The interval 1–20 (MANIKSAKKRVKQTVVRNER) is disordered.

This sequence belongs to the bacterial ribosomal protein bS20 family.

Binds directly to 16S ribosomal RNA. The sequence is that of Small ribosomal subunit protein bS20 from Xylella fastidiosa (strain 9a5c).